A 449-amino-acid polypeptide reads, in one-letter code: Doublesex- and mab-3-related transcription factor A2 (449 aa).

Positions 57–104 (CARCRNHGVVSALKGHKRYCRWKDCMCAKCTLIAERQRVMAAQVALRR) form a DNA-binding region, DM. The disordered stretch occupies residues 163–259 (FPKTQLSGST…PSPSSAASRH (97 aa)). Residues 166-187 (TQLSGSTTTQKSVGKPASTESD) are compositionally biased toward polar residues. Residues 230–240 (GSVSSLGSDSG) are compositionally biased toward low complexity. The 36-residue stretch at 260–295 (MNAIDILTRVFPSHKRSVLELVLQGCGKDVVQAIEQ) folds into the DMA domain.

The protein belongs to the DMRT family. As to expression, expressed in brain and eye.

The protein resides in the nucleus. May be involved in sexual development. The sequence is that of Doublesex- and mab-3-related transcription factor A2 (dmrta2) from Xiphophorus maculatus (Southern platyfish).